We begin with the raw amino-acid sequence, 70 residues long: Melittin (70 aa).

A signal peptide spans 1–21 (MKFLVNVALVFMVVYISFIYA). The propeptide at 22–43 (APEPEPAPEAEAEADAEADPEA) is removed by a dipeptidylpeptidase. Glycine 44 carries the post-translational modification N-formylglycine; partial. Glutamine 69 carries the glutamine amide modification.

The protein belongs to the melittin family. As to quaternary structure, monomer (in solution and for integration into membranes), homotetramer (in solution and potentially as a toroidal pore in membranes), and potenially homomultimer (as a toroidal pore in membranes). In terms of tissue distribution, expressed by the venom gland.

It is found in the secreted. It localises to the target cell membrane. Its function is as follows. Main toxin of bee venom with strong hemolytic activity and antimicrobial activity. It has enhancing effects on bee venom phospholipase A2 activity. This amphipathic toxin binds to negatively charged membrane surface and forms pore by inserting into lipid bilayers inducing the leakage of ions and molecules and the enhancement of permeability that ultimately leads to cell lysis. It acts as a voltage-gated pore with higher selectivity for anions over cations. The ion conductance has been shown to be voltage-dependent. Self-association of melittin in membranes is promoted by high ionic strength, but not by the presence of negatively charged lipids. In vivo, intradermal injection into healthy human volunteers produce sharp pain sensation and an inflammatory response. It produces pain by activating primary nociceptor cells directly and indirectly due to its ability to activate plasma membrane phospholipase A2 and its pore-forming activity. This Apis cerana cerana (Oriental honeybee) protein is Melittin (MELT).